Reading from the N-terminus, the 189-residue chain is Putative dihydrofolate reductase (189 aa).

A DHFR domain is found at 3–185 (KMNLIVAMDA…LKFEFCKWKV (183 aa)). NADP(+) is bound by residues Ala-9 and 15 to 21 (GIGKNGV). 29–34 (DMQYFA) is a binding site for substrate. 53-55 (RKC) serves as a coordination point for NADP(+). Position 69 (Arg-69) interacts with substrate. NADP(+) is bound by residues 75 to 77 (SRQ) and 115 to 122 (GGAEIYDL).

This sequence belongs to the dihydrofolate reductase family.

The enzyme catalyses (6S)-5,6,7,8-tetrahydrofolate + NADP(+) = 7,8-dihydrofolate + NADPH + H(+). It functions in the pathway cofactor biosynthesis; tetrahydrofolate biosynthesis; 5,6,7,8-tetrahydrofolate from 7,8-dihydrofolate: step 1/1. Key enzyme in folate metabolism. Catalyzes an essential reaction for de novo glycine and purine synthesis, and for DNA precursor synthesis. The polypeptide is Putative dihydrofolate reductase (dhfr-1) (Caenorhabditis elegans).